Consider the following 660-residue polypeptide: Elongation factor 4 (660 aa).

The 187-residue stretch at 55–241 (AQIRNFCIIA…EVVRQVPPPQ (187 aa)) folds into the tr-type G domain. GTP-binding positions include 67 to 72 (DHGKST) and 188 to 191 (NKID).

Belongs to the TRAFAC class translation factor GTPase superfamily. Classic translation factor GTPase family. LepA subfamily.

The protein localises to the cell membrane. It carries out the reaction GTP + H2O = GDP + phosphate + H(+). Functionally, required for accurate and efficient protein synthesis under certain stress conditions. May act as a fidelity factor of the translation reaction, by catalyzing a one-codon backward translocation of tRNAs on improperly translocated ribosomes. Back-translocation proceeds from a post-translocation (POST) complex to a pre-translocation (PRE) complex, thus giving elongation factor G a second chance to translocate the tRNAs correctly. Binds to ribosomes in a GTP-dependent manner. This is Elongation factor 4 from Mycolicibacterium paratuberculosis (strain ATCC BAA-968 / K-10) (Mycobacterium paratuberculosis).